Consider the following 556-residue polypeptide: mRNA-capping enzyme subunit beta (556 aa).

Disordered stretches follow at residues 1-28 and 56-217; these read MKPS…DNNV and LPPV…QKTS. Positions 63-74 are enriched in polar residues; sequence VSTSDTGNTSHT. Over residues 85-96 the composition is skewed to acidic residues; sequence ESDETDTDDEPG. Composition is skewed to basic and acidic residues over residues 103–131 and 139–212; these read TKFR…KDKQ and IQLD…KDIF.

The protein belongs to the fungal TPase family. In terms of assembly, heterodimer. The mRNA-capping enzyme is composed of two separate chains alpha and beta, respectively a mRNA guanylyltransferase and an mRNA 5'-triphosphate monophosphatase. Mg(2+) serves as cofactor.

The protein resides in the nucleus. The enzyme catalyses a 5'-end triphospho-ribonucleoside in mRNA + H2O = a 5'-end diphospho-ribonucleoside in mRNA + phosphate + H(+). In terms of biological role, first step of mRNA capping. Converts the 5'-triphosphate end of a nascent mRNA chain into a diphosphate end. This Kluyveromyces lactis (strain ATCC 8585 / CBS 2359 / DSM 70799 / NBRC 1267 / NRRL Y-1140 / WM37) (Yeast) protein is mRNA-capping enzyme subunit beta (CET1).